The sequence spans 893 residues: MELDEGELFMELIRDVANELDIDVLCHKILVNVGLLTHADRGSLFLAKGTPNNKYLVAKLFDVTQKTALKDAVTRARAEEIIIPFGIGIAGMVAQTKEMINIKEAYMDARFNCEIDLKTGYKTNAILCMPICNYEGDIIGVAQIINKTNGCMEFDEHDVEIFRRYLTFCGIGIQNAQLFEMSVQEYRRNQILLNLARSIFEEQNNLECLVTKIMTEARELLKCERCSVFLVDLDCCEESHLEKIIEKPHQLEQRATRAIKGGDSFEEKQKMRNRFTVLFELGGESQAANVSRPSINDLSHSTLAQIAQFVATTGQTVNICDVHDWVREHNQIRAEGEIDSTHAILCMPIVNAQKTVIGVAQLINKASGLPFTESDASIFEAFAIFCGLGIHNTQMYENACKLMAKQKVALECLSYHATAGQDQTEKLIQDPIAEAETYNLYSFTFTDFDLVDDDTCRAVLRMFMQCNLVSQFHIPYDVLCRWVLSVRKNYRPVKYHNWRHALNVAQTMFAMLKTGKMERFMTDLEILGLLVACLCHDLDHRGTNNAFQTKTESPLAILYTTSTMEHHHFDQCVMILNSEGNNIFQALSPEDYRSVMKTVESAILSTDLAMYFKKRNAFLELVENGEFDWQGEEKKDLLCGMMMTACDVSAIAKPWEVQHRVAKLVADEFFDQGDLEKLQLNTQPVAMMDRERKDELPKMQVGFIDVICLPLYRVLCDTFPWITPLYEGTLENRRNWQDLAEKVEMGLTWIDHDTIDKPVEEFAGCADEEIKDIEFTVTTLNCNQQSQHGGDDSHTPEHQRSGSRLSIKKTGALGKVVRSKLSKTLYNSMDGSKPKTSLKLLESHVSEDMDDKSPTSPSQPHLGSVGRMSASSSTSSAGTVDKSKKRSKLCALL.

2 consecutive GAF domains span residues 21-173 (DIDV…GIGI) and 205-390 (NLEC…GLGI). One can recognise a PDEase domain in the interval 420–743 (GQDQTEKLIQ…RNWQDLAEKV (324 aa)). The active-site Proton donor is His496. A divalent metal cation-binding residues include His500, His536, Asp537, and Asp647. 2 disordered regions span residues 784-807 (QQSQ…RLSI) and 844-893 (HVSE…CALL). Basic and acidic residues-rich tracts occupy residues 789–800 (GGDDSHTPEHQR) and 844–853 (HVSEDMDDKS). Over residues 864 to 880 (SVGRMSASSSTSSAGTV) the composition is skewed to low complexity. Residues 883–893 (SKKRSKLCALL) are compositionally biased toward basic residues. Position 890 is a cysteine methyl ester (Cys890). Cys890 carries S-farnesyl cysteine lipidation. Residues 891–893 (ALL) constitute a propeptide, removed in mature form.

The protein belongs to the cyclic nucleotide phosphodiesterase family. Interacts with PrBP. The cofactor is a divalent metal cation.

The protein resides in the cell membrane. The catalysed reaction is 3',5'-cyclic GMP + H2O = GMP + H(+). In terms of biological role, has a role regulating cGMP transport in Malpighian tubule principal cells. The protein is cGMP-specific 3',5'-cyclic phosphodiesterase of Drosophila virilis (Fruit fly).